The primary structure comprises 354 residues: Guanine nucleotide-binding protein G(o) subunit alpha (354 aa).

A lipid anchor (N-myristoyl glycine) is attached at Gly2. The S-palmitoyl cysteine moiety is linked to residue Cys3. The region spanning 32-354 is the G-alpha domain; sequence KDVKLLLLGA…AYNLRGCGLY (323 aa). Residues 35–48 form a G1 motif region; sequence KLLLLGAGESGKST. Residues Glu43, Lys46, Ser47, Thr48, Ser152, Leu176, Arg177, Thr178, and Arg179 each contribute to the GTP site. Ser47 contacts Mg(2+). The interval 174-182 is G2 motif; it reads DILRTRVKT. Thr182 is a Mg(2+) binding site. Residues 197–206 form a G3 motif region; that stretch reads FRLFDVGGQR. Positions 266 to 273 are G4 motif; sequence ILFLNKKD. Asn270, Asp273, and Cys325 together coordinate GTP. The segment at 324 to 329 is G5 motif; that stretch reads TCATDT.

The protein belongs to the G-alpha family. G(i/o/t/z) subfamily. In terms of assembly, g proteins are composed of 3 units; alpha, beta and gamma.

The enzyme catalyses GTP + H2O = GDP + phosphate + H(+). In terms of biological role, guanine nucleotide-binding proteins (G proteins) function as transducers downstream of G protein-coupled receptors (GPCRs) in numerous signaling cascades. The alpha chain contains the guanine nucleotide binding site and alternates between an active, GTP-bound state and an inactive, GDP-bound state. Signaling by an activated GPCR promotes GDP release and GTP binding. The alpha subunit has a low GTPase activity that converts bound GTP to GDP, thereby terminating the signal. Both GDP release and GTP hydrolysis are modulated by numerous regulatory proteins. Signaling is mediated via effector proteins, such as adenylate cyclase. Inhibits adenylate cyclase activity, leading to decreased intracellular cAMP levels. The chain is Guanine nucleotide-binding protein G(o) subunit alpha (gna0) from Xenopus laevis (African clawed frog).